Consider the following 352-residue polypeptide: Phenylalanine--tRNA ligase alpha subunit (352 aa).

Glutamate 258 is a binding site for Mg(2+).

This sequence belongs to the class-II aminoacyl-tRNA synthetase family. Phe-tRNA synthetase alpha subunit type 1 subfamily. As to quaternary structure, tetramer of two alpha and two beta subunits. Mg(2+) serves as cofactor.

Its subcellular location is the cytoplasm. It carries out the reaction tRNA(Phe) + L-phenylalanine + ATP = L-phenylalanyl-tRNA(Phe) + AMP + diphosphate + H(+). This Staphylococcus carnosus (strain TM300) protein is Phenylalanine--tRNA ligase alpha subunit.